Consider the following 212-residue polypeptide: 3-isopropylmalate dehydratase small subunit 1 (212 aa).

The protein belongs to the LeuD family. LeuD type 1 subfamily. In terms of assembly, heterodimer of LeuC and LeuD.

The enzyme catalyses (2R,3S)-3-isopropylmalate = (2S)-2-isopropylmalate. The protein operates within amino-acid biosynthesis; L-leucine biosynthesis; L-leucine from 3-methyl-2-oxobutanoate: step 2/4. Functionally, catalyzes the isomerization between 2-isopropylmalate and 3-isopropylmalate, via the formation of 2-isopropylmaleate. This is 3-isopropylmalate dehydratase small subunit 1 from Chromobacterium violaceum (strain ATCC 12472 / DSM 30191 / JCM 1249 / CCUG 213 / NBRC 12614 / NCIMB 9131 / NCTC 9757 / MK).